We begin with the raw amino-acid sequence, 574 residues long: NEDD4-binding protein 2-like 2 (574 aa).

4 disordered regions span residues His82–Ala110, Tyr127–Asn161, Glu182–Ser204, and Thr542–Tyr574. Basic and acidic residues-rich tracts occupy residues Pro129 to Glu141 and Asp149 to Asn161. The stretch at Ser162–Glu196 forms a coiled coil. Residues Gly563–Tyr574 are compositionally biased toward polar residues.

This Rattus norvegicus (Rat) protein is NEDD4-binding protein 2-like 2 (N4bp2l2).